A 430-amino-acid chain; its full sequence is Proteinase-activated receptor 1 (430 aa).

The first 21 residues, 1–21 (MGPRRLLIVALGLSLCGPLLS), serve as a signal peptide directing secretion. A propeptide spans 22–41 (SRVPMSQPESERTDATVNPR) (removed for receptor activation). The Extracellular segment spans residues 42-107 (SFFLRNPSEN…SGYLTSPWLT (66 aa)). Residues N67 and N80 are each glycosylated (N-linked (GlcNAc...) asparagine). Residues 108–133 (LFMPSVYTIVFIVSLPLNVLAIAVFV) traverse the membrane as a helical segment. Residues 134-142 (LRMKVKKPA) are Cytoplasmic-facing. The helical transmembrane segment at 143–162 (VVYMLHLAMADVLFVSVLPF) threads the bilayer. At 163-181 (KISYYFSGTDWQFGSGMCR) the chain is on the extracellular side. A disulfide bond links C180 and C259. Residues 182 to 203 (FATAAFYGNMYASIMLMTVISI) form a helical membrane-spanning segment. At 204-223 (DRFLAVVYPIQSLSWRTLGR) the chain is on the cytoplasmic side. The chain crosses the membrane as a helical span at residues 224 to 244 (ANFTCVVIWVMAIMGVVPLLL). The Extracellular portion of the chain corresponds to 245–273 (KEQTTRVPGLNITTCHDVLSENLMQGFYS). N-linked (GlcNAc...) asparagine glycosylation is present at N255. The chain crosses the membrane as a helical span at residues 274-293 (YYFSAFSAIFFLVPLIVSTV). Residues 294–316 (CYTSIIRCLSSSAVANRSKKSRA) are Cytoplasmic-facing. The chain crosses the membrane as a helical span at residues 317-339 (LFLSAAVFCIFIVCFGPTNVLLI). The Extracellular segment spans residues 340–354 (VHYLFLSDSPGTEAA). Residues 355-379 (YFAYLLCVCVSSVSCCIDPLIYYYA) form a helical membrane-spanning segment. The Cytoplasmic segment spans residues 380–430 (SSECQRHLYSILCCKESSDPNSCNSTGQLMPSKMDTCSSHLNNSIYKKLLA). Position 423 is a phosphoserine (S423).

Belongs to the G-protein coupled receptor 1 family. Post-translationally, proteolytic cleavage by thrombin generates a new N-terminus that functions as a tethered ligand. Also proteolytically cleaved by cathepsin CTSG. Phosphorylated in the C-terminal tail; probably mediating desensitization prior to the uncoupling and internalization of the receptor.

The protein localises to the cell membrane. In terms of biological role, high affinity receptor that binds the activated thrombin, leading to calcium release from intracellular stores. The thrombin-activated receptor signaling pathway is mediated through PTX-insensitive G proteins, activation of phospholipase C resulting in the production of 1D-myo-inositol 1,4,5-trisphosphate (InsP3) which binds to InsP3 receptors causing calcium release from the stores. In astrocytes, the calcium released into the cytosol allows the Ca(2+)-dependent release of L-glutamate into the synaptic cleft through BEST1, that targets the neuronal postsynaptic GRIN2A/NMDAR receptor resulting in the synaptic plasticity regulation. May play a role in platelets activation and in vascular development. Mediates up-regulation of pro-inflammatory cytokines, such as MCP-1/CCL2 and IL6, triggered by coagulation factor Xa (F10) in cardiac fibroblasts and umbilical vein endothelial cells. The protein is Proteinase-activated receptor 1 of Mus musculus (Mouse).